The primary structure comprises 1781 residues: MTTYRAIPSDGVDLAASCGARVGDVLPGPHTGDYAPLGFWAQNGSMSQPLGESPATATATATATTRPSPTTPAMPKMGVRARVADWPPKREALREHSNPSPSQDTDGTKATKMAHSMRSIQNGQPPTSTPASSGSKAFHRLSRRRSKDVEFQDGWPRSPGRAFLPLRHRSSSEITLSECDAEDAGEPRGARHTGALPLFREYGSTSSIDVQGMPEQSFFDILNEFRSEQPDARGCQALTELLRADPGPHLMGGGGGAKGDSHNGQPAKDSLLPLQPTKEKEKARKKPARGLGGGDTVDSSIFRKLRSSKPEGEAGRSPGEADEGRSPPEASRPWVCQKSFAHFDVQSMLFDLNEAAANRVSVSQRRNTTTGASAASAASAMASLTASRAHSLGGLDPAFTSTEDLNCKENLEQDLGDDNSNDLLLSCPHFRNEIGGECERNVSFSRASVGSPSSGEGHLAEPALSAYRTNASISVLEVPKEQQRTQSRPRQYSIEHVDLGARYYQDYFVGKEHANYFGVDEKLGPVAVSIKREKLEDHKEHGPQYQYRIIFRTRELITLRGSILEDATPTATKHGTGRGLPLKDALEYVIPELNIHCLRLALNTPKVTEQLLKLDEQGLCRKHKVGILYCKAGQSSEEEMYNNEEAGPAFEEFLSLIGEKVCLKGFTKYAAQLDVKTDSTGTHSLYTMYQDYEIMFHVSTLLPYTPNNRQQLLRKRHIGNDIVTIIFQEPGALPFTPKNIRSHFQHVFIIVRVHNPCTDNVCYSMAVTRSKDAPPFGPPIPSGTTFRKSDVFRDFLLAKVINAENAAHKSDKFHTMATRTRQEYLKDLAENCVSNTPIDSTGKFNLISLTSKKKEKTKARAGAEQHSAGAIAWRVVAQDYAQGVEIDCILGISNEFVVLLDLRTKEVVFNCYCGDVIGWTPDSSTLKIFYGRGDHIFLQATEGSVEDIREIVQRLKVMTSGWETVDMTLRRNGLGQLGFHVKYDGTVAEVEDYGFAWQAGLRQGSRLVEICKVAVVTLTHDQMIDLLRTSVTVKVVIIPPFEDGTPRRGWPETYDMNTSEPKTEQESITPGGRPPYRSNAPWQWSGPASHNSLPASKWATPTTPGHAQSLSRPLKQTPIVPFRESQPLHSKRPVSFPETPYTVSPAGADRVPPYRQPSGSFSTPGSATYVRYKPSPERYTAAPHPLLSLDPHFSHDGTSSGDSSSGGLTSQESTMERQKPEPLWHVPAQARLSAIAGSSGNKHPSRQDAAGKDSPNRHSKGEPQYSSHSSSNTLSSNASSSHSDDRWFDPLDPLEPEQDPLSKGGSSDSGIDTTLYTSSPSCMSLAKAPRPAKPHKPPGSMGLCGGGREAAGRSHHADRRREVSPAPAVAGQSKGYRPKLYSSGSSTPTGLAGGSRDPPRQPSDMGSRVGYPAQVYKTASAETPRPSQLAQPSPFQLSASVPKSFFSKQPVRNKHPTGWKRTEEPPPRPLPFSDPKKQVDTNTKNVFGQPRLRASLRDLRSPRKNYKSTIEDDLKKLIIMDNLGPEQERDTGQSPQKGLQRTLSDESLCSGRREPSFASPAGLEPGLPSDVLFTSTCAFPSSTLPARRQHQHPHPPVGPGATPAAGSGFPEKKSTISASELSLADGRDRPLRRLDPGLMPLPDTAAGLEWSSLVNAAKAYEVQRAVSLFSLNDPALSPDIPPAHSPVHSHLSLERGPPTPRTTPTMSEEPPLDLTGKVYQLEVMLKQLHTDLQKEKQDKVVLQSEVASLRQNNQRLQEESQAASEQLRKFAEIFCREKKEL.

Disordered stretches follow at residues 45 to 166 and 239 to 332; these read SMSQ…FLPL and TELL…EASR. Over residues 54-73 the composition is skewed to low complexity; sequence PATATATATATTRPSPTTPA. Residues 87–97 show a composition bias toward basic and acidic residues; the sequence is PPKREALREHS. Ser-100 is modified (phosphoserine). A compositionally biased stretch (polar residues) spans 118-135; the sequence is RSIQNGQPPTSTPASSGS. The span at 137–146 shows a compositional bias: basic residues; the sequence is AFHRLSRRRS. Phosphoserine is present on Ser-146. Ser-401 is modified (phosphoserine). The Rap-GAP domain maps to 611-828; it reads LLKLDEQGLC…RTRQEYLKDL (218 aa). Residues 966–1042 form the PDZ domain; the sequence is DMTLRRNGLG…VKVVIIPPFE (77 aa). Disordered regions lie at residues 1046–1112, 1124–1221, 1236–1565, and 1583–1636; these read PRRG…SLSR, ESQP…QKPE, AGSS…GLEP, and TLPA…RLDP. 2 stretches are compositionally biased toward polar residues: residues 1080 to 1111 and 1157 to 1166; these read APWQ…QSLS and PSGSFSTPGS. Over residues 1196–1210 the composition is skewed to low complexity; sequence DGTSSGDSSSGGLTS. Basic and acidic residues predominate over residues 1245–1261; it reads SRQDAAGKDSPNRHSKG. The segment covering 1266 to 1281 has biased composition (low complexity); it reads SSHSSSNTLSSNASSS. Over residues 1304 to 1322 the composition is skewed to polar residues; that stretch reads GGSSDSGIDTTLYTSSPSC. Ser-1364 is modified (phosphoserine). Residue Thr-1387 is modified to Phosphothreonine. The segment covering 1425–1441 has biased composition (polar residues); that stretch reads RPSQLAQPSPFQLSASV. Lys-1448 is subject to N6-acetyllysine. Residues 1509–1518 show a composition bias toward basic and acidic residues; that stretch reads TIEDDLKKLI. A compositionally biased stretch (polar residues) spans 1532-1547; the sequence is GQSPQKGLQRTLSDES. Ser-1544 and Ser-1547 each carry phosphoserine. Positions 1599-1609 are enriched in low complexity; the sequence is PGATPAAGSGF. Phosphoserine occurs at positions 1619 and 1622. Positions 1625–1635 are enriched in basic and acidic residues; the sequence is DGRDRPLRRLD. Ser-1677 bears the Phosphoserine mark. Residues 1685–1712 are disordered; it reads SPVHSHLSLERGPPTPRTTPTMSEEPPL. Thr-1699 and Thr-1703 each carry phosphothreonine. Residues 1720–1774 are a coiled coil; the sequence is QLEVMLKQLHTDLQKEKQDKVVLQSEVASLRQNNQRLQEESQAASEQLRKFAEIF.

It is found in the apical cell membrane. Functionally, plays a critical role in epithelial cell morphogenesis, polarity, adhesion and cytoskeletal organization in the lens. This is Signal-induced proliferation-associated 1-like protein 3 (SIPA1L3) from Homo sapiens (Human).